The chain runs to 430 residues: UDP-N-acetylglucosamine 1-carboxyvinyltransferase (430 aa).

Residue 22 to 23 (KN) participates in phosphoenolpyruvate binding. Arg-102 provides a ligand contact to UDP-N-acetyl-alpha-D-glucosamine. Cys-126 acts as the Proton donor in catalysis. Cys-126 carries the post-translational modification 2-(S-cysteinyl)pyruvic acid O-phosphothioketal. UDP-N-acetyl-alpha-D-glucosamine contacts are provided by residues 131-135 (RPVDL), 172-175 (KVSV), Asp-317, and Ile-339.

The protein belongs to the EPSP synthase family. MurA subfamily.

The protein resides in the cytoplasm. It carries out the reaction phosphoenolpyruvate + UDP-N-acetyl-alpha-D-glucosamine = UDP-N-acetyl-3-O-(1-carboxyvinyl)-alpha-D-glucosamine + phosphate. It participates in cell wall biogenesis; peptidoglycan biosynthesis. Cell wall formation. Adds enolpyruvyl to UDP-N-acetylglucosamine. This chain is UDP-N-acetylglucosamine 1-carboxyvinyltransferase, found in Agrobacterium fabrum (strain C58 / ATCC 33970) (Agrobacterium tumefaciens (strain C58)).